Consider the following 621-residue polypeptide: Protein Rep78 (621 aa).

Residues Met1–Thr199 form the PV NS1-Nuc domain. Positions 83, 90, and 92 each coordinate a divalent metal cation. An RCR-2 motif is present at residues His90–His92. Catalysis depends on Tyr156, which acts as the For nuclease activity. The short motif at Tyr156–Lys160 is the RCR-3 element. Over residues Val196–Ser211 the composition is skewed to polar residues. Positions Val196–Ile216 are disordered. The region spanning Asp308–Lys463 is the SF3 helicase domain. Residue Gly334–Thr341 coordinates ATP. The tract at residues Gly489 to Ala520 is disordered.

In terms of assembly, hexamer when associated with the viral DNA ori sequence. Interacts with host PRKX. Interacts with host TOPORS. Interacts with host TBP and SUB1/PC4; these interactions play important roles in transcriptional regulation. The cofactor is a divalent metal cation.

Its subcellular location is the host nucleus. Functionally, plays an essential role in the initiation of viral DNA synthesis. Binds specifically to an inverted terminal repeat element (ITR) on the 3' and 5' ends of the viral DNA, where it cleaves a site specifically to generate a priming site for initiation of the synthesis of a complementary strand. Also plays a role as transcriptional regulator, DNA helicase and as key factors in site-specific integration of the viral genome. Regulates host PKA activity by interacting with host PRKX as a mechanism of interfering with helper virus propagation and promoting its own replication. Inhibits the host cell cycle G1/S, S and G2/M transitions. These arrests may provide essential cellular factors for viral DNA replication. The polypeptide is Protein Rep78 (Rep78) (Adeno-associated virus 2 (isolate Srivastava/1982) (AAV-2)).